The primary structure comprises 169 residues: Short form salivary protein D7R3 (169 aa).

Positions 1-21 (MFGKLLPCAILVWCLFSLGQA) are cleaved as a signal peptide. Intrachain disulfides connect C30-C62, C43-C168, and C101-C120. Positions 31 and 46 each coordinate noradrenaline. Residue E31 coordinates serotonin. H59, Y118, D135, and E138 together coordinate serotonin. Histamine is bound by residues Y118, D135, and E138. Residues D135 and E138 each coordinate noradrenaline.

The protein belongs to the PBP/GOBP family. In terms of tissue distribution, female saliva (at protein level). Female salivary gland. Low-level expression in female carcass without salivary glands. Not detected in male tissues.

It localises to the secreted. Functionally, modulates blood feeding of female mosquitoes on vertebrate species by binding and sequestering different mediators involved in the host response. Binds serotonin, noradrenaline, histamine and adrenaline. Inhibits histamine-, serotonin- and noradrenaline-induced smooth muscle contraction. Exhibits vasodilating activity. This chain is Short form salivary protein D7R3, found in Anopheles gambiae (African malaria mosquito).